Reading from the N-terminus, the 374-residue chain is Pectate lyase 1 (374 aa).

Positions 1 to 21 (MDSPCLVALLVFSFVIGSCFS) are cleaved as a signal peptide. 2 disulfides stabilise this stretch: C28–C45 and C128–C147. N158 carries N-linked (GlcNAc...) asparagine glycosylation. D170 lines the Ca(2+) pocket. N191 is a glycosylation site (N-linked (GlcNAc...) (complex) asparagine). Ca(2+) is bound by residues D194 and D198. The active site involves R250. An N-linked (GlcNAc...) asparagine glycan is attached at N293. C306 and C312 are oxidised to a cystine. N-linked (GlcNAc...) (complex) asparagine glycosylation is present at N354.

It belongs to the polysaccharide lyase 1 family. Amb a subfamily. Ca(2+) is required as a cofactor. In terms of processing, N-glycosylated; contains fucose and xylose.

The enzyme catalyses Eliminative cleavage of (1-&gt;4)-alpha-D-galacturonan to give oligosaccharides with 4-deoxy-alpha-D-galact-4-enuronosyl groups at their non-reducing ends.. Its pathway is glycan metabolism; pectin degradation; 2-dehydro-3-deoxy-D-gluconate from pectin: step 2/5. Its function is as follows. Has pectate lyase activity. This Cryptomeria japonica (Japanese cedar) protein is Pectate lyase 1.